The sequence spans 120 residues: Purkinje cell protein 2 (120 aa).

GoLoco domains follow at residues 7–29 (QEGF…RCSL) and 47–69 (MDNL…RVTV). A disordered region spans residues 16–120 (HVQGDRMEEQ…SSPQPQTQAP (105 aa)). The segment covering 108–120 (RRNSSPQPQTQAP) has biased composition (polar residues). A Phosphoserine modification is found at S111.

In terms of tissue distribution, cerebellum (Purkinje cells) and retinal bipolar neurons.

In terms of biological role, may function as a cell-type specific modulator for G protein-mediated cell signaling. In Mus musculus (Mouse), this protein is Purkinje cell protein 2 (Pcp2).